The chain runs to 72 residues: Translation initiation factor IF-1 2 (72 aa).

An S1-like domain is found at 1-72 (MAKEDAIEVD…KRGRITYRMK (72 aa)).

The protein belongs to the IF-1 family. As to quaternary structure, component of the 30S ribosomal translation pre-initiation complex which assembles on the 30S ribosome in the order IF-2 and IF-3, IF-1 and N-formylmethionyl-tRNA(fMet); mRNA recruitment can occur at any time during PIC assembly.

It is found in the cytoplasm. In terms of biological role, one of the essential components for the initiation of protein synthesis. Stabilizes the binding of IF-2 and IF-3 on the 30S subunit to which N-formylmethionyl-tRNA(fMet) subsequently binds. Helps modulate mRNA selection, yielding the 30S pre-initiation complex (PIC). Upon addition of the 50S ribosomal subunit IF-1, IF-2 and IF-3 are released leaving the mature 70S translation initiation complex. This Nitratidesulfovibrio vulgaris (strain DP4) (Desulfovibrio vulgaris) protein is Translation initiation factor IF-1 2.